The chain runs to 136 residues: Histone H3 (136 aa).

Positions 1-43 (MARTKQTARKSTGGKAPRKQLASKAARKAAPSTGGVKKPHRYK) are disordered. Residue Lys5 is modified to N6,N6,N6-trimethyllysine; alternate. Residue Lys5 is modified to N6,N6-dimethyllysine; alternate. Lys5 and Lys10 each carry N6-methyllysine; alternate. The residue at position 10 (Lys10) is an N6-acetyllysine; alternate. Ser11 bears the Phosphoserine mark. The residue at position 15 (Lys15) is an N6,N6-dimethyllysine; alternate. N6-acetyllysine; alternate is present on residues Lys15, Lys19, Lys24, Lys28, and Lys37. Lys19, Lys24, Lys28, and Lys37 each carry N6-methyllysine; alternate. An N6,N6,N6-trimethyllysine; alternate mark is found at Lys28 and Lys37. An N6,N6-dimethyllysine; alternate mark is found at Lys28 and Lys37. An N6-acetyllysine mark is found at Lys57 and Lys65. Lys80 carries the N6,N6,N6-trimethyllysine; alternate modification. An N6,N6-dimethyllysine; alternate modification is found at Lys80. The residue at position 80 (Lys80) is an N6-methyllysine; alternate.

This sequence belongs to the histone H3 family. As to quaternary structure, the nucleosome is a histone octamer containing two molecules each of H2A, H2B, H3 and H4 assembled in one H3-H4 heterotetramer and two H2A-H2B heterodimers. The octamer wraps approximately 147 bp of DNA. In terms of processing, phosphorylated to form H3S10ph. H3S10ph promotes subsequent H3K14ac formation and is required for transcriptional activation through TBP recruitment to the promoters. Mono-, di- and trimethylated by the COMPASS complex to form H3K4me1/2/3. H3K4me activates gene expression by regulating transcription elongation and plays a role in telomere length maintenance. H3K4me enrichment correlates with transcription levels, and occurs in a 5' to 3' gradient with H3K4me3 enrichment at the 5'-end of genes, shifting to H3K4me2 and then H3K4me1. Methylated by set2 to form H3K36me. H3K36me represses gene expression. Methylated by dot1 to form H3K79me. H3K79me is required for association of SIR proteins with telomeric regions and for telomeric silencing. The COMPASS-mediated formation of H3K4me2/3 and the dot1-mediated formation of H3K79me require H2BK123ub1. Post-translationally, acetylation of histone H3 leads to transcriptional activation. H3K14ac formation by gcn5 is promoted by H3S10ph. H3K14ac can also be formed by esa1. H3K56ac formation occurs predominantly in newly synthesized H3 molecules during G1, S and G2/M of the cell cycle and may be involved in DNA repair.

The protein resides in the nucleus. The protein localises to the chromosome. Core component of nucleosome. Nucleosomes wrap and compact DNA into chromatin, limiting DNA accessibility to the cellular machineries which require DNA as a template. Histones thereby play a central role in transcription regulation, DNA repair, DNA replication and chromosomal stability. DNA accessibility is regulated via a complex set of post-translational modifications of histones, also called histone code, and nucleosome remodeling. The chain is Histone H3 (hht1) from Neosartorya fischeri (strain ATCC 1020 / DSM 3700 / CBS 544.65 / FGSC A1164 / JCM 1740 / NRRL 181 / WB 181) (Aspergillus fischerianus).